The primary structure comprises 681 residues: Nucleolar GTP-binding protein 1 (681 aa).

In terms of domain architecture, OBG-type G spans 170-341; it reads RTLILCGFPN…LRDRACDELL (172 aa). Residues 176-183, 222-226, and 290-293 each bind GTP; these read GFPNVGKS, DTPGI, and NKVD.

This sequence belongs to the TRAFAC class OBG-HflX-like GTPase superfamily. OBG GTPase family. NOG subfamily. In terms of tissue distribution, ubiquitously expressed.

It localises to the nucleus. Its subcellular location is the nucleolus. Involved in the biogenesis of the 60S ribosomal subunit. Has a role in regulating longevity, growth and brood size. May regulate fat storage via the insulin/IGF pathway. The polypeptide is Nucleolar GTP-binding protein 1 (Caenorhabditis elegans).